The chain runs to 126 residues: Small ribosomal subunit protein uS12 (126 aa).

Residues 1-16 are compositionally biased toward polar residues; the sequence is MPTVNQLVRQGRTMNK. Residues 1–24 form a disordered region; the sequence is MPTVNQLVRQGRTMNKTKTKSPAL. Asp89 is modified (3-methylthioaspartic acid).

It belongs to the universal ribosomal protein uS12 family. As to quaternary structure, part of the 30S ribosomal subunit. Contacts proteins S8 and S17. May interact with IF1 in the 30S initiation complex.

In terms of biological role, with S4 and S5 plays an important role in translational accuracy. Its function is as follows. Interacts with and stabilizes bases of the 16S rRNA that are involved in tRNA selection in the A site and with the mRNA backbone. Located at the interface of the 30S and 50S subunits, it traverses the body of the 30S subunit contacting proteins on the other side and probably holding the rRNA structure together. The combined cluster of proteins S8, S12 and S17 appears to hold together the shoulder and platform of the 30S subunit. This Elusimicrobium minutum (strain Pei191) protein is Small ribosomal subunit protein uS12.